A 131-amino-acid chain; its full sequence is Small ribosomal subunit protein uS11 (131 aa).

This sequence belongs to the universal ribosomal protein uS11 family. In terms of assembly, part of the 30S ribosomal subunit. Interacts with proteins S7 and S18. Binds to IF-3.

Functionally, located on the platform of the 30S subunit, it bridges several disparate RNA helices of the 16S rRNA. Forms part of the Shine-Dalgarno cleft in the 70S ribosome. The protein is Small ribosomal subunit protein uS11 of Granulibacter bethesdensis (strain ATCC BAA-1260 / CGDNIH1).